The primary structure comprises 353 residues: Photosystem II D2 protein (353 aa).

T2 is modified (N-acetylthreonine). Position 2 is a phosphothreonine (T2). The chain crosses the membrane as a helical span at residues 41–61 (CAYFALGGWFTGTTFVTSWYT). H118 contacts chlorophyll a. A helical membrane pass occupies residues 125 to 141 (GFMLRQFELARSVQLRP). 2 residues coordinate pheophytin a: Q130 and N143. The chain crosses the membrane as a helical span at residues 153–166 (VFVSVFLIYPLGQS). H198 lines the chlorophyll a pocket. Residues 208–228 (AALLCAIHGATVENTLFEDGD) form a helical membrane-spanning segment. A plastoquinone-binding residues include H215 and F262. H215 lines the Fe cation pocket. H269 contributes to the Fe cation binding site. Residues 279–295 (GLWMSALGVVGLALNLR) traverse the membrane as a helical segment.

It belongs to the reaction center PufL/M/PsbA/D family. PSII is composed of 1 copy each of membrane proteins PsbA, PsbB, PsbC, PsbD, PsbE, PsbF, PsbH, PsbI, PsbJ, PsbK, PsbL, PsbM, PsbT, PsbX, PsbY, PsbZ, Psb30/Ycf12, at least 3 peripheral proteins of the oxygen-evolving complex and a large number of cofactors. It forms dimeric complexes. The cofactor is The D1/D2 heterodimer binds P680, chlorophylls that are the primary electron donor of PSII, and subsequent electron acceptors. It shares a non-heme iron and each subunit binds pheophytin, quinone, additional chlorophylls, carotenoids and lipids. There is also a Cl(-1) ion associated with D1 and D2, which is required for oxygen evolution. The PSII complex binds additional chlorophylls, carotenoids and specific lipids..

Its subcellular location is the plastid. It localises to the chloroplast thylakoid membrane. It carries out the reaction 2 a plastoquinone + 4 hnu + 2 H2O = 2 a plastoquinol + O2. In terms of biological role, photosystem II (PSII) is a light-driven water:plastoquinone oxidoreductase that uses light energy to abstract electrons from H(2)O, generating O(2) and a proton gradient subsequently used for ATP formation. It consists of a core antenna complex that captures photons, and an electron transfer chain that converts photonic excitation into a charge separation. The D1/D2 (PsbA/PsbD) reaction center heterodimer binds P680, the primary electron donor of PSII as well as several subsequent electron acceptors. D2 is needed for assembly of a stable PSII complex. This is Photosystem II D2 protein from Aethionema grandiflorum (Persian stone-cress).